The sequence spans 148 residues: Large ribosomal subunit protein cL37 (148 aa).

The transit peptide at 1–65 directs the protein to the chloroplast; sequence MALLCFNSLP…SSHGRIVVKA (65 aa). Position 66 is an N-acetylalanine (A66). A disordered region spans residues 125-148; that stretch reads LVRKRKMRKKGRWPPSKMKKNKNV.

This sequence belongs to the chloroplast-specific ribosomal protein cL37 family. As to quaternary structure, part of the 50S ribosomal subunit.

The protein resides in the plastid. It is found in the chloroplast. This Arabidopsis thaliana (Mouse-ear cress) protein is Large ribosomal subunit protein cL37 (PSRP5).